A 97-amino-acid chain; its full sequence is Acylphosphatase (97 aa).

An Acylphosphatase-like domain is found at 5 to 92 (RAHVWISGRV…GEFVRFEITF (88 aa)). Catalysis depends on residues arginine 20 and asparagine 38.

This sequence belongs to the acylphosphatase family.

The enzyme catalyses an acyl phosphate + H2O = a carboxylate + phosphate + H(+). This Syntrophobacter fumaroxidans (strain DSM 10017 / MPOB) protein is Acylphosphatase (acyP).